Consider the following 52-residue polypeptide: UPF0181 protein HD_1137 (52 aa).

This sequence belongs to the UPF0181 family.

In Haemophilus ducreyi (strain 35000HP / ATCC 700724), this protein is UPF0181 protein HD_1137.